Consider the following 797-residue polypeptide: Short transient receptor potential channel 4-associated protein (797 aa).

Ala-2 is subject to N-acetylalanine. The tract at residues 2–400 (AAAPAAAGAG…VLYVLCVLLM (399 aa)) is interaction with TNFRSF1A.

As to quaternary structure, component of the DCX(TRPC4AP) E3 ubiquitin ligase complex, at least composed of CUL4A, DDB1, TRPC4AP/TRUSS and RBX1. Interacts with MYC. Constitutively associated with TNFRSF1A. Directly interacts with TRADD, TRAF2, CHUK, IKBKB and IKBKG. Interacts with TRPC1, TRPC4 and TRPC5. Phosphorylated by GSK3B; phosphorylation is required for ubiquitination. Post-translationally, ubiquitinated by a SCF (SKP1-CUL1-F-box protein) E3 ubiquitin-protein ligase containing SKP2, leading to its degradation. Phosphorylation by GSK3B is required for ubiquitination. Widely expressed, with high levels in heart, liver and testis.

It localises to the cytoplasm. The protein resides in the perinuclear region. It participates in protein modification; protein ubiquitination. Its function is as follows. Substrate-recognition component of a DCX (DDB1-CUL4-X-box) E3 ubiquitin-protein ligase complex required for cell cycle control. The DCX(TRPC4AP) complex specifically mediates the polyubiquitination and subsequent degradation of MYC as part of the DesCEND (destruction via C-end degrons) pathway. The DesCEND (destruction via C-end degrons) pathway recognizes a C-degron located at the extreme C terminus of target proteins, leading to their ubiquitination and degradation. The DCX(TRPC4AP) complex specifically recognizes proteins with an arginine at the minus 3 position (R-3 motif) at the C-terminus, such as MYC, leading to their ubiquitination and degradation. Also participates in the activation of NFKB1 in response to ligation of TNFRSF1A, possibly by linking TNFRSF1A to the IKK signalosome. Involved in JNK activation via its interaction with TRAF2. Also involved in elevation of endoplasmic reticulum Ca(2+) storage reduction in response to CHRM1. The sequence is that of Short transient receptor potential channel 4-associated protein from Mus musculus (Mouse).